The primary structure comprises 352 residues: MDYQVSSPTYDIDYYTSEPCQKTNVKQIAARLLPPLYSLVFIFGFVGNMLVILILINCKRLKSMTDIYLLNLAISDLFFLLTVPFWAHYAAAQWDFGNTMCQLLTGLYFIGFFSGIFFIILLTIDRYLAIVHAVFALKARTVTFGVVTSVITWVVAVFASLPGIIFTRSQKEGLHYTCSSHFPYSQYQFWKNFQTLKIVILGLVLPLLVMVICYSGILKTLLRCRNEKKRHRAVRLIFTIMIVYFLFWAPYNIVLLLNTFQEFFGLNNCSSSNRLDQAMQVTETLGMTHCCINPIIYAFVGEKFRNYLLVFFQKHIAKRFCKCCSIFQQEAPERASSVYTRSTGEQEISVGL.

Topologically, residues 1-30 are extracellular; the sequence is MDYQVSSPTYDIDYYTSEPCQKTNVKQIAA. Tyr3 bears the Sulfotyrosine mark. Residues Ser6 and Ser7 are each glycosylated (O-linked (GalNAc...) serine). A sulfotyrosine mark is found at Tyr10, Tyr14, and Tyr15. 2 disulfides stabilise this stretch: Cys20/Cys269 and Cys101/Cys178. The helical transmembrane segment at 31–58 threads the bilayer; it reads RLLPPLYSLVFIFGFVGNMLVILILINC. At 59-68 the chain is on the cytoplasmic side; it reads KRLKSMTDIY. Residues 69 to 89 form a helical membrane-spanning segment; sequence LLNLAISDLFFLLTVPFWAHY. Topologically, residues 90–102 are extracellular; sequence AAAQWDFGNTMCQ. The helical transmembrane segment at 103 to 124 threads the bilayer; that stretch reads LLTGLYFIGFFSGIFFIILLTI. Residues 125 to 141 lie on the Cytoplasmic side of the membrane; that stretch reads DRYLAIVHAVFALKART. The chain crosses the membrane as a helical span at residues 142-166; sequence VTFGVVTSVITWVVAVFASLPGIIF. Over 167–198 the chain is Extracellular; sequence TRSQKEGLHYTCSSHFPYSQYQFWKNFQTLKI. Residues 199 to 218 traverse the membrane as a helical segment; that stretch reads VILGLVLPLLVMVICYSGIL. Over 219–235 the chain is Cytoplasmic; sequence KTLLRCRNEKKRHRAVR. A helical transmembrane segment spans residues 236-260; that stretch reads LIFTIMIVYFLFWAPYNIVLLLNTF. Residues 261-277 lie on the Extracellular side of the membrane; the sequence is QEFFGLNNCSSSNRLDQ. The helical transmembrane segment at 278 to 301 threads the bilayer; that stretch reads AMQVTETLGMTHCCINPIIYAFVG. Residues 302 to 352 lie on the Cytoplasmic side of the membrane; it reads EKFRNYLLVFFQKHIAKRFCKCCSIFQQEAPERASSVYTRSTGEQEISVGL. 3 S-palmitoyl cysteine lipidation sites follow: Cys321, Cys323, and Cys324. Phosphoserine; by BARK1 is present on residues Ser336, Ser337, Ser342, and Ser349.

The protein belongs to the G-protein coupled receptor 1 family. As to quaternary structure, interacts with PRAF2. Efficient ligand binding to CCL3/MIP-1alpha and CCL4/MIP-1beta requires sulfation, O-glycosylation and sialic acid modifications. Glycosylation on Ser-6 is required for efficient binding of CCL4. Interacts with GRK2. Interacts with ARRB1 and ARRB2. Interacts with CNIH4. Interacts with S100A4; this interaction stimulates T-lymphocyte chemotaxis. Post-translationally, sulfated on at least 2 of the N-terminal tyrosines. Sulfation is required for efficient binding of the chemokines, CCL3 and CCL4. In terms of processing, palmitoylation in the C-terminal is important for cell surface expression. Phosphorylation on serine residues in the C-terminal is stimulated by binding CC chemokines especially by APO-RANTES. Post-translationally, O-glycosylated, but not N-glycosylated. Ser-6 appears to be the major site even if Ser-7 may be also O-glycosylated. Also sialylated glycans present which contribute to chemokine binding. Thr-16 and Ser-17 may also be glycosylated and, if so, with small moieties such as a T-antigen.

The protein localises to the cell membrane. Functionally, receptor for a number of inflammatory CC-chemokines including CCL3/MIP-1-alpha, CCL4/MIP-1-beta and RANTES and subsequently transduces a signal by increasing the intracellular calcium ion level. May play a role in the control of granulocytic lineage proliferation or differentiation. Participates in T-lymphocyte migration to the infection site by acting as a chemotactic receptor. This Gorilla gorilla gorilla (Western lowland gorilla) protein is C-C chemokine receptor type 5 (CCR5).